A 211-amino-acid chain; its full sequence is Shikimate kinase (211 aa).

Residues 1-13 (MNASANLCAASAN) are compositionally biased toward low complexity. The tract at residues 1–24 (MNASANLCAASANDPQPGDQEAAH) is disordered. 50 to 55 (GAGKTT) serves as a coordination point for ATP. Residue threonine 54 coordinates Mg(2+). Residues aspartate 72, arginine 96, and glycine 118 each contribute to the substrate site. Arginine 156 is a binding site for ATP. Residue arginine 175 coordinates substrate.

It belongs to the shikimate kinase family. In terms of assembly, monomer. It depends on Mg(2+) as a cofactor.

The protein resides in the cytoplasm. It carries out the reaction shikimate + ATP = 3-phosphoshikimate + ADP + H(+). Its pathway is metabolic intermediate biosynthesis; chorismate biosynthesis; chorismate from D-erythrose 4-phosphate and phosphoenolpyruvate: step 5/7. Catalyzes the specific phosphorylation of the 3-hydroxyl group of shikimic acid using ATP as a cosubstrate. This is Shikimate kinase from Bordetella parapertussis (strain 12822 / ATCC BAA-587 / NCTC 13253).